A 310-amino-acid chain; its full sequence is Putative S-adenosyl-L-methionine-dependent methyltransferase MUL_4762 (310 aa).

S-adenosyl-L-methionine-binding positions include D132 and 161 to 162 (DL).

The protein belongs to the UPF0677 family.

Exhibits S-adenosyl-L-methionine-dependent methyltransferase activity. This chain is Putative S-adenosyl-L-methionine-dependent methyltransferase MUL_4762, found in Mycobacterium ulcerans (strain Agy99).